The following is a 366-amino-acid chain: Ribosomal RNA large subunit methyltransferase M (366 aa).

S-adenosyl-L-methionine is bound by residues S188, 221-224, D240, D260, and D277; that span reads CPGG. K306 serves as the catalytic Proton acceptor.

Belongs to the class I-like SAM-binding methyltransferase superfamily. RNA methyltransferase RlmE family. RlmM subfamily. As to quaternary structure, monomer.

It is found in the cytoplasm. It carries out the reaction cytidine(2498) in 23S rRNA + S-adenosyl-L-methionine = 2'-O-methylcytidine(2498) in 23S rRNA + S-adenosyl-L-homocysteine + H(+). In terms of biological role, catalyzes the 2'-O-methylation at nucleotide C2498 in 23S rRNA. The protein is Ribosomal RNA large subunit methyltransferase M of Salmonella arizonae (strain ATCC BAA-731 / CDC346-86 / RSK2980).